A 510-amino-acid chain; its full sequence is 2,3-bisphosphoglycerate-independent phosphoglycerate mutase (510 aa).

Residues aspartate 10 and serine 60 each contribute to the Mn(2+) site. Serine 60 (phosphoserine intermediate) is an active-site residue. Substrate contacts are provided by residues histidine 121, arginine 150 to aspartate 151, arginine 182, arginine 188, arginine 252 to arginine 255, and lysine 325. Residues aspartate 392, histidine 396, aspartate 433, histidine 434, and histidine 451 each coordinate Mn(2+).

It belongs to the BPG-independent phosphoglycerate mutase family. It depends on Mn(2+) as a cofactor.

It is found in the plastid. Its subcellular location is the chloroplast. The catalysed reaction is (2R)-2-phosphoglycerate = (2R)-3-phosphoglycerate. The protein operates within carbohydrate degradation; glycolysis; pyruvate from D-glyceraldehyde 3-phosphate: step 3/5. Functionally, catalyzes the interconversion of 2-phosphoglycerate and 3-phosphoglycerate. This chain is 2,3-bisphosphoglycerate-independent phosphoglycerate mutase, found in Gracilaria tenuistipitata var. liui (Red alga).